A 140-amino-acid chain; its full sequence is uncharacterized protein (140 aa).

The protein belongs to the asfivirus D129L family.

This is an uncharacterized protein from African swine fever virus (isolate Pig/Kenya/KEN-50/1950) (ASFV).